A 330-amino-acid polypeptide reads, in one-letter code: Fructose-1,6-bisphosphatase class 1 (330 aa).

E84, D103, L105, and D106 together coordinate Mg(2+). Substrate contacts are provided by residues 106–109 (DGSS), N196, and K262. Residue E268 coordinates Mg(2+).

This sequence belongs to the FBPase class 1 family. As to quaternary structure, homotetramer. Mg(2+) is required as a cofactor.

Its subcellular location is the cytoplasm. The enzyme catalyses beta-D-fructose 1,6-bisphosphate + H2O = beta-D-fructose 6-phosphate + phosphate. Its pathway is carbohydrate biosynthesis; gluconeogenesis. This is Fructose-1,6-bisphosphatase class 1 from Shewanella baltica (strain OS185).